The sequence spans 209 residues: 2-phospho-L-lactate guanylyltransferase (209 aa).

Belongs to the CofC family. As to quaternary structure, homodimer.

The catalysed reaction is (2S)-2-phospholactate + GTP + H(+) = (2S)-lactyl-2-diphospho-5'-guanosine + diphosphate. It functions in the pathway cofactor biosynthesis; coenzyme F420 biosynthesis. In terms of biological role, guanylyltransferase that catalyzes the activation of (2S)-2-phospholactate (2-PL) as (2S)-lactyl-2-diphospho-5'-guanosine, via the condensation of 2-PL with GTP. It is involved in the biosynthesis of coenzyme F420, a hydride carrier cofactor. The polypeptide is 2-phospho-L-lactate guanylyltransferase (Methanosphaerula palustris (strain ATCC BAA-1556 / DSM 19958 / E1-9c)).